We begin with the raw amino-acid sequence, 530 residues long: Bifunctional NAD(P)H-hydrate repair enzyme Nnr (530 aa).

Residues 1–224 (MYLVTAAEMG…GIPQKLVATQ (224 aa)) are NAD(P)H-hydrate epimerase. The region spanning 9–222 (MGQLDRLASS…DIGIPQKLVA (214 aa)) is the YjeF N-terminal domain. Positions 60-64 (NNGGD) are NADPHX 1; for epimerase activity. 2 residues coordinate K(+): Asn-61 and Asp-132. The interval 136-142 (GTGFKGA) is NADPHX 1; for epimerase activity. Asp-165 is a binding site for (6S)-NADPHX. K(+) is bound at residue Ser-168. A YjeF C-terminal domain is found at 232 to 515 (TAAWCRSQLP…DFLPYVLRNL (284 aa)). Residues 232-530 (TAAWCRSQLP…TIVAAGLGRD (299 aa)) form an ADP-dependent (S)-NAD(P)H-hydrate dehydratase region. Gly-338 contacts (6S)-NADPHX. Residues 389 to 395 (HPGEMAR) are NADPHX 2; for dehydratase activity. ADP-binding positions include 426-430 (KGART) and 446-455 (NPGMATAGSG). Asp-456 serves as a coordination point for (6S)-NADPHX.

In the N-terminal section; belongs to the NnrE/AIBP family. The protein in the C-terminal section; belongs to the NnrD/CARKD family. Requires K(+) as cofactor.

The enzyme catalyses (6S)-NADHX + ADP = AMP + phosphate + NADH + H(+). It carries out the reaction (6S)-NADPHX + ADP = AMP + phosphate + NADPH + H(+). It catalyses the reaction (6R)-NADHX = (6S)-NADHX. The catalysed reaction is (6R)-NADPHX = (6S)-NADPHX. Bifunctional enzyme that catalyzes the epimerization of the S- and R-forms of NAD(P)HX and the dehydration of the S-form of NAD(P)HX at the expense of ADP, which is converted to AMP. This allows the repair of both epimers of NAD(P)HX, a damaged form of NAD(P)H that is a result of enzymatic or heat-dependent hydration. The sequence is that of Bifunctional NAD(P)H-hydrate repair enzyme Nnr (nnr) from Moorella thermoacetica (strain ATCC 39073 / JCM 9320).